A 443-amino-acid polypeptide reads, in one-letter code: tRNA-2-methylthio-N(6)-dimethylallyladenosine synthase (443 aa).

In terms of domain architecture, MTTase N-terminal spans 3-120 (SKLYIRTFGC…LPDLIDARRR (118 aa)). [4Fe-4S] cluster-binding residues include Cys-12, Cys-49, Cys-83, Cys-157, Cys-161, and Cys-164. The region spanning 143–375 (RTEGSTAFVS…QEKIQLNAQA (233 aa)) is the Radical SAM core domain. The TRAM domain maps to 378-441 (QGMVDTVQRI…SHTLRGEISD (64 aa)).

It belongs to the methylthiotransferase family. MiaB subfamily. Monomer. Requires [4Fe-4S] cluster as cofactor.

The protein resides in the cytoplasm. It carries out the reaction N(6)-dimethylallyladenosine(37) in tRNA + (sulfur carrier)-SH + AH2 + 2 S-adenosyl-L-methionine = 2-methylsulfanyl-N(6)-dimethylallyladenosine(37) in tRNA + (sulfur carrier)-H + 5'-deoxyadenosine + L-methionine + A + S-adenosyl-L-homocysteine + 2 H(+). Catalyzes the methylthiolation of N6-(dimethylallyl)adenosine (i(6)A), leading to the formation of 2-methylthio-N6-(dimethylallyl)adenosine (ms(2)i(6)A) at position 37 in tRNAs that read codons beginning with uridine. The polypeptide is tRNA-2-methylthio-N(6)-dimethylallyladenosine synthase (Nitrosomonas europaea (strain ATCC 19718 / CIP 103999 / KCTC 2705 / NBRC 14298)).